A 105-amino-acid chain; its full sequence is Precursor of CEP15 (105 aa).

The signal sequence occupies residues 1–29; it reads MDATKIKFDVILLSFLLIISGIPSNLGLS. Positions 30 to 90 are excised as a propeptide; it reads TSVRGTTRSE…PSPPVPDYDD (61 aa). The segment covering 68-80 has biased composition (low complexity); it reads DYYDGGSSSSTTS. The tract at residues 68 to 105 is disordered; that stretch reads DYYDGGSSSSTTSPSPPVPDYDDIYRRQGDVPSPGIGH. Hydroxyproline is present on residues P99 and P101.

Belongs to the C-terminally encoded plant signaling peptide (CEP) family. In terms of assembly, interacts with CEP receptors (e.g. CEPR1 and CEPR2). The mature small signaling peptide is generated by proteolytic processing of the longer precursor.

The protein resides in the secreted. The protein localises to the extracellular space. It is found in the apoplast. Its function is as follows. Extracellular signaling peptide that may regulate primary root growth rate and systemic nitrogen (N)-demand signaling. The polypeptide is Precursor of CEP15 (Arabidopsis thaliana (Mouse-ear cress)).